The chain runs to 856 residues: Leucine--tRNA ligase (856 aa).

The 'HIGH' region motif lies at 53-63 (PYPSGNLHMGH). The 'KMSKS' region motif lies at 622 to 626 (KMSKS). Lys-625 is a binding site for ATP.

The protein belongs to the class-I aminoacyl-tRNA synthetase family.

The protein resides in the cytoplasm. It carries out the reaction tRNA(Leu) + L-leucine + ATP = L-leucyl-tRNA(Leu) + AMP + diphosphate. This chain is Leucine--tRNA ligase, found in Prochlorococcus marinus (strain MIT 9301).